Reading from the N-terminus, the 30-residue chain is ASAAGAVREDDDETLLNPVLNSLDNLVSGL.

Leucine amide is present on L30.

This sequence belongs to the frog skin active peptide (FSAP) family. Rothein subfamily. As to expression, expressed by the skin dorsal glands.

The protein resides in the secreted. Its function is as follows. Lacks antimicrobial activity. Does not inhibit the formation of NO by neuronal nitric oxide. The sequence is that of Rothein 3.4 from Litoria rothii (Roth's tree frog).